Reading from the N-terminus, the 244-residue chain is Small ribosomal subunit protein uS3 (244 aa).

The KH type-2 domain maps to 39–107; the sequence is VREMLRKKLA…PAHINVTEVR (69 aa). Positions 213–244 are disordered; sequence VGQEKQDDSPRNDRNDRGDRGDRPSRPAREAR. The segment covering 216–244 has biased composition (basic and acidic residues); sequence EKQDDSPRNDRNDRGDRGDRPSRPAREAR.

The protein belongs to the universal ribosomal protein uS3 family. In terms of assembly, part of the 30S ribosomal subunit. Forms a tight complex with proteins S10 and S14.

Functionally, binds the lower part of the 30S subunit head. Binds mRNA in the 70S ribosome, positioning it for translation. The chain is Small ribosomal subunit protein uS3 from Xanthomonas campestris pv. campestris (strain 8004).